We begin with the raw amino-acid sequence, 332 residues long: Agamous-like MADS-box protein AGL66 (332 aa).

The MADS-box domain occupies 1–61 (MGRVKLEIKR…DRLSLFSGKT (61 aa)). The stretch at 120–151 (TAINSDVEELEHEVYKLQQQLLMAEEELRKYE) forms a coiled coil.

As to quaternary structure, forms a heterodimer with AGL30. As to expression, expressed in pollen.

The protein resides in the nucleus. Probable transcription factor that forms a heterodimer with the MADS-box protein AGL30 and is involved in the regulation of pollen maturation at the late stages of pollen development and pollen tube growth. The protein is Agamous-like MADS-box protein AGL66 of Arabidopsis thaliana (Mouse-ear cress).